We begin with the raw amino-acid sequence, 72 residues long: High-potential iron-sulfur protein isozyme 1 (72 aa).

An N-carbamoylalanine; partial modification is found at Ala1. Positions 34, 37, 51, and 65 each coordinate [4Fe-4S] cluster.

This sequence belongs to the high-potential iron-sulfur protein (HiPIP) family. In terms of assembly, homodimer.

Functionally, specific class of high-redox-potential 4Fe-4S ferredoxins. Functions in anaerobic electron transport in most purple and in some other photosynthetic bacteria and in at least one genus (Paracoccus) of halophilic, denitrifying bacteria. The chain is High-potential iron-sulfur protein isozyme 1 from Ectothiorhodospira mobilis.